A 672-amino-acid chain; its full sequence is uncharacterized protein (672 aa).

The segment covering 1–10 (MAKSDGDDPL) has biased composition (basic and acidic residues). A disordered region spans residues 1–41 (MAKSDGDDPLRPASPRLRSSRRHSLRYSAYTGGPDPLAPPV).

This is an uncharacterized protein from Mycobacterium bovis (strain ATCC BAA-935 / AF2122/97).